The primary structure comprises 305 residues: tRNA dimethylallyltransferase (305 aa).

Residue 9–16 (GPTAVGKT) coordinates ATP. 11 to 16 (TAVGKT) lines the substrate pocket. Residues 34–37 (DSRQ) form an interaction with substrate tRNA region.

Belongs to the IPP transferase family. As to quaternary structure, monomer. The cofactor is Mg(2+).

The catalysed reaction is adenosine(37) in tRNA + dimethylallyl diphosphate = N(6)-dimethylallyladenosine(37) in tRNA + diphosphate. Catalyzes the transfer of a dimethylallyl group onto the adenine at position 37 in tRNAs that read codons beginning with uridine, leading to the formation of N6-(dimethylallyl)adenosine (i(6)A). This Roseiflexus sp. (strain RS-1) protein is tRNA dimethylallyltransferase.